A 530-amino-acid chain; its full sequence is GATA zinc finger domain-containing protein 4 (530 aa).

Disordered stretches follow at residues 1–27 (MSINHFNNNKNNNNKNNKNNEENFWDN) and 212–386 (STVV…INNN). 3 stretches are compositionally biased toward low complexity: residues 7-17 (NNNKNNNNKNN), 216-290 (SNSP…FNNN), and 299-386 (NSNN…INNN). Residues 494-518 (CSMCNIKESISWIKTMVNGQLCNAC) form a GATA-type zinc finger.

This chain is GATA zinc finger domain-containing protein 4 (gtaD), found in Dictyostelium discoideum (Social amoeba).